Consider the following 198-residue polypeptide: Molybdenum cofactor guanylyltransferase (198 aa).

GTP-binding positions include 14–16 (LAG), K27, D73, and D103. Position 103 (D103) interacts with Mg(2+).

Belongs to the MobA family. In terms of assembly, monomer. Mg(2+) serves as cofactor.

The protein localises to the cytoplasm. The enzyme catalyses Mo-molybdopterin + GTP + H(+) = Mo-molybdopterin guanine dinucleotide + diphosphate. In terms of biological role, transfers a GMP moiety from GTP to Mo-molybdopterin (Mo-MPT) cofactor (Moco or molybdenum cofactor) to form Mo-molybdopterin guanine dinucleotide (Mo-MGD) cofactor. The protein is Molybdenum cofactor guanylyltransferase of Pseudomonas aeruginosa (strain LESB58).